We begin with the raw amino-acid sequence, 223 residues long: DnaJ homolog subfamily B member 9 (223 aa).

The N-terminal stretch at 1–23 is a signal peptide; that stretch reads MATPQSIFIFAICILMITELILA. The J domain maps to 26 to 90; the sequence is SYYDILGVPK…NRRKEYDTLG (65 aa). The tract at residues 91–223 is divergent targeting domain; it reads HSAFTSGKGQ…VTTYTDCSGQ (133 aa). Ser133 bears the Phosphoserine mark.

As to quaternary structure, interacts with HSPA5/BiP; interaction is direct. Interacts with ERN1/IRE1 (via the luminal region). Interacts with DERL1. As to expression, widely expressed. Expressed at highest level in the liver, placenta and kidney.

The protein resides in the endoplasmic reticulum lumen. Functionally, co-chaperone for Hsp70 protein HSPA5/BiP that acts as a key repressor of the ERN1/IRE1-mediated unfolded protein response (UPR). J domain-containing co-chaperones stimulate the ATPase activity of Hsp70 proteins and are required for efficient substrate recognition by Hsp70 proteins. In the unstressed endoplasmic reticulum, interacts with the luminal region of ERN1/IRE1 and selectively recruits HSPA5/BiP: HSPA5/BiP disrupts the dimerization of the active ERN1/IRE1 luminal region, thereby inactivating ERN1/IRE1. Also involved in endoplasmic reticulum-associated degradation (ERAD) of misfolded proteins. Required for survival of B-cell progenitors and normal antibody production. In Homo sapiens (Human), this protein is DnaJ homolog subfamily B member 9 (DNAJB9).